The sequence spans 397 residues: Dual specificity mitogen-activated protein kinase kinase 4 (397 aa).

The tract at residues 1–38 is disordered; sequence MAAPSPSGGGGSGGGGGTPGPIGPPASGHPAVSSMQGK. Position 2 is an N-acetylalanine (A2). The span at 7 to 20 shows a compositional bias: gly residues; it reads SGGGGSGGGGGTPG. Residues 35–50 form a d domain region; that stretch reads MQGKRKALKLNFANPP. An Asymmetric dimethylarginine; alternate modification is found at R56. R56 carries the post-translational modification Omega-N-methylarginine; alternate. S88 carries the post-translational modification Phosphoserine. A Protein kinase domain is found at 100–366; the sequence is LKDLGEIGRG…KELLKHPFIL (267 aa). ATP is bound by residues 106-114 and K129; that span reads IGRGAYGSV. Catalysis depends on D227, which acts as the Proton acceptor. S255 carries the phosphoserine modification. T259 is modified (phosphothreonine). The DVD domain stretch occupies residues 362-385; it reads HPFILMYEERTVEVACYVCKILDQ.

Belongs to the protein kinase superfamily. STE Ser/Thr protein kinase family. MAP kinase kinase subfamily. As to quaternary structure, interacts with SPAG9. Interacts (via its D domain) with its substrates MAPK8/JNK1, MAPK9/JNK2, MAPK10/JNK3, MAPK11 and MAPK14. Interacts (via its DVD domain) with MAP3Ks activators like MAP3K1/MEKK1 and MAP3K11/MLK3. Interacts with ARRB1, ARRB2 and MAPK8IP3/JIP3. Activated by phosphorylation on Ser-255 and Thr-259 by MAP kinase kinase kinases (MAP3Ks). Strong expression is detected in most of the central nervous system and in liver and thymus during early stages of development. While expression in nervous system increases over time, expression in fetal liver and thymus gradually decreases as embryogenesis proceeds. High level of expression in the central nervous system persists throughout postnatal development and remained at a stable level in adult brain.

Its subcellular location is the cytoplasm. The protein localises to the nucleus. It catalyses the reaction L-seryl-[protein] + ATP = O-phospho-L-seryl-[protein] + ADP + H(+). The enzyme catalyses L-threonyl-[protein] + ATP = O-phospho-L-threonyl-[protein] + ADP + H(+). The catalysed reaction is L-tyrosyl-[protein] + ATP = O-phospho-L-tyrosyl-[protein] + ADP + H(+). Activated in response to a variety of cellular stresses, including UV and gamma-irradiation, heat shock, hyperosmolarity, T-cell receptor stimulation, peroxide and inflammatory cytokines. Also activated by developmental cues. MAP2K4/MKK4 is activated by the majority of MKKKs, such as MAP3K5/ASK1, MAP3K1/MEKK1, MAP3K7/TAK1, MAP3K10/MLK2, MAP3K11/MLK3, MAP3K12/DLK and MAP3K13/LZK. Functionally, dual specificity protein kinase which acts as an essential component of the MAP kinase signal transduction pathway. Essential component of the stress-activated protein kinase/c-Jun N-terminal kinase (SAP/JNK) signaling pathway. With MAP2K7/MKK7, is the one of the only known kinase to directly activate the stress-activated protein kinase/c-Jun N-terminal kinases MAPK8/JNK1, MAPK9/JNK2 and MAPK10/JNK3. MAP2K4/MKK4 and MAP2K7/MKK7 both activate the JNKs by phosphorylation, but they differ in their preference for the phosphorylation site in the Thr-Pro-Tyr motif. MAP2K4 shows preference for phosphorylation of the Tyr residue and MAP2K7/MKK7 for the Thr residue. The phosphorylation of the Thr residue by MAP2K7/MKK7 seems to be the prerequisite for JNK activation at least in response to pro-inflammatory cytokines, while other stimuli activate both MAP2K4/MKK4 and MAP2K7/MKK7 which synergistically phosphorylate JNKs. MAP2K4 is required for maintaining peripheral lymphoid homeostasis. The MKK/JNK signaling pathway is also involved in mitochondrial death signaling pathway, including the release cytochrome c, leading to apoptosis. Whereas MAP2K7/MKK7 exclusively activates JNKs, MAP2K4/MKK4 additionally activates the p38 MAPKs MAPK11, MAPK12, MAPK13 and MAPK14. This Mus musculus (Mouse) protein is Dual specificity mitogen-activated protein kinase kinase 4 (Map2k4).